The following is a 385-amino-acid chain: Probable thioesterase PNKD (385 aa).

Polar residues predominate over residues 31–42 (NKASQNRSRALQ). The disordered stretch occupies residues 31–57 (NKASQNRSRALQSHSSPECKEEPEPLS). The Zn(2+) site is built by histidine 172, histidine 174, aspartate 176, histidine 177, histidine 229, aspartate 253, and histidine 291.

It belongs to the metallo-beta-lactamase superfamily. Glyoxalase II family. It depends on Zn(2+) as a cofactor. In terms of processing, undergoes cleavage at the N-terminus.

The protein localises to the cell membrane. Its subcellular location is the mitochondrion. The catalysed reaction is a thioester + H2O = a thiol + a carboxylate + H(+). Its function is as follows. Probable thioesterase that may play a role in cellular detoxification processes; it likely acts on a yet-unknown alpha-hydroxythioester substrate. In vitro, it is able to catalyze the hydrolysis of S-D-lactoyl-glutathione to form glutathione and D-lactic acid at very low rate, though this reaction is not physiologically relevant in vivo. The chain is Probable thioesterase PNKD (PNKD) from Bos taurus (Bovine).